A 546-amino-acid polypeptide reads, in one-letter code: Glucose-6-phosphate isomerase (546 aa).

The active-site Proton donor is Glu-353. Catalysis depends on residues His-384 and Lys-512.

Belongs to the GPI family.

It localises to the cytoplasm. It carries out the reaction alpha-D-glucose 6-phosphate = beta-D-fructose 6-phosphate. Its pathway is carbohydrate biosynthesis; gluconeogenesis. It functions in the pathway carbohydrate degradation; glycolysis; D-glyceraldehyde 3-phosphate and glycerone phosphate from D-glucose: step 2/4. Its function is as follows. Catalyzes the reversible isomerization of glucose-6-phosphate to fructose-6-phosphate. This is Glucose-6-phosphate isomerase from Methylococcus capsulatus (strain ATCC 33009 / NCIMB 11132 / Bath).